The sequence spans 222 residues: UPF0758 protein YicR (222 aa).

The MPN domain occupies Pro100 to Ile222. The Zn(2+) site is built by His171, His173, and Asp184. The JAMM motif signature appears at His171–Asp184.

This sequence belongs to the UPF0758 family. YicR subfamily.

The sequence is that of UPF0758 protein YicR from Escherichia coli O81 (strain ED1a).